The sequence spans 1378 residues: Protein CLASP-1 (1378 aa).

An HEAT 1 repeat occupies 168–206 (LIPQLCRLTNDPNSEVRDVSTQCLIDLMVYGGKPIVAKI). 3 disordered regions span residues 231–254 (RGDLPPKHTITMETTPAQPSRNSL), 266–325 (IHPS…TRSS), and 590–725 (MLRD…HQTP). Composition is skewed to low complexity over residues 269–283 (SASTTSFTSSARLST) and 610–619 (NQKQQPNQQN). Polar residues-rich tracts occupy residues 620–630 (ISQKFLSQRSA) and 637–648 (IQLSVKPQTTAI). A compositionally biased stretch (low complexity) spans 664–676 (SSTSTSFSAVRSS). A compositionally biased stretch (polar residues) spans 677–690 (GYGQNQSTTPNRAK). Residues 704 to 721 (TNGNNNNKSSSSSPSTST) show a composition bias toward low complexity. The stretch at 740-767 (ASLTQEQANCLQNAMNTAKDEMSKNNED) forms a coiled coil. The span at 775–784 (IRKTPPKEVP) shows a compositional bias: basic and acidic residues. The tract at residues 775–823 (IRKTPPKEVPRSYNNSPFKPSNLDSSVHRSYNNNSPFRPSSGSVGSGSN) is disordered. A compositionally biased stretch (polar residues) spans 786–812 (SYNNSPFKPSNLDSSVHRSYNNNSPFR). One copy of the HEAT 2 repeat lies at 1305 to 1341 (HLIVNDVAPCFVTAYESMSSTVRKCAVFGLVALVQRV).

Belongs to the CLASP family.

The protein localises to the cytoplasm. It is found in the cytoskeleton. In terms of biological role, microtubule plus-end tracking protein that promotes the stabilization of dynamic microtubules. Operates redundantly with cls-2 and cls-3 in regulating microtubule processes which position the spindle during asymmetric cell division. The protein is Protein CLASP-1 (cls-1) of Caenorhabditis elegans.